The sequence spans 183 residues: Dual-action ribosomal maturation protein DarP (183 aa).

The protein belongs to the DarP family.

The protein localises to the cytoplasm. Member of a network of 50S ribosomal subunit biogenesis factors which assembles along the 30S-50S interface, preventing incorrect 23S rRNA structures from forming. Promotes peptidyl transferase center (PTC) maturation. In Escherichia coli O6:H1 (strain CFT073 / ATCC 700928 / UPEC), this protein is Dual-action ribosomal maturation protein DarP.